The following is a 481-amino-acid chain: 6-phosphogluconate dehydrogenase, decarboxylating (481 aa).

NADP(+)-binding positions include 11 to 16, 34 to 36, 76 to 78, and Asn104; these read GLAVMG, NRT, and VKA. Substrate is bound by residues Asn104 and 130–132; that span reads SGG. Lys184 (proton acceptor) is an active-site residue. Position 187-188 (187-188) interacts with substrate; it reads HN. Catalysis depends on Glu191, which acts as the Proton donor. Substrate-binding residues include Tyr192, Lys259, Arg286, Arg445, and His451.

Belongs to the 6-phosphogluconate dehydrogenase family. As to quaternary structure, homodimer.

The catalysed reaction is 6-phospho-D-gluconate + NADP(+) = D-ribulose 5-phosphate + CO2 + NADPH. Its pathway is carbohydrate degradation; pentose phosphate pathway; D-ribulose 5-phosphate from D-glucose 6-phosphate (oxidative stage): step 3/3. Functionally, catalyzes the oxidative decarboxylation of 6-phosphogluconate to ribulose 5-phosphate and CO(2), with concomitant reduction of NADP to NADPH. The chain is 6-phosphogluconate dehydrogenase, decarboxylating (Pgd) from Drosophila melanogaster (Fruit fly).